Consider the following 468-residue polypeptide: MFGFRLFILAAVALAYIQCAAARMTVAHRLGARSLPTPENDPFYTPDDGWESAAPGTILKKREITVANSGVFQYGVRGFQLLYRTSGVNRGDASHTVTTVIIPENYDKDKLVSANMYEDSYSSNCAPSYSMRKGSKVFNDLANSYQMLFITTLLHEGWAVTVPDHEGPNNAFTSGRVEGHAILDGIRATLNYKKLGLNSDAKVIGYGYSGGALATGWAASLHSQYAHELNVAGWSMGGTVSNVTEWLGYIDNTTGAGFALASLGGLSSSYSELAWVQDNLTSKGRRLLDQSAQNCMYQNLWAVGKQKILDDSVFAGGSTFLQNDGALNILNKLTLGRFSKFVPIAPVFMFHATHDEVVPFNMAITTADAWCAQGAQIKFLSNTGSEMEHTNTELFNLPNVIFFMRDRFKGKDFGGQCQYPSSNDPWFNPQILGTSAAIYLQQVLDLIGNRIGGHDSILWDKVHSKQQP.

The first 22 residues, 1-22 (MFGFRLFILAAVALAYIQCAAA), serve as a signal peptide directing secretion. Cysteines 125 and 295 form a disulfide. The Nucleophile role is filled by serine 209. Asparagine 242, asparagine 252, and asparagine 279 each carry an N-linked (GlcNAc...) asparagine glycan. Active-site residues include aspartate 355 and histidine 389.

It belongs to the AB hydrolase superfamily. Lipase family. Class Lip subfamily.

Its subcellular location is the secreted. The catalysed reaction is a triacylglycerol + H2O = a diacylglycerol + a fatty acid + H(+). It carries out the reaction a monoacylglycerol + H2O = glycerol + a fatty acid + H(+). The enzyme catalyses a diacylglycerol + H2O = a monoacylglycerol + a fatty acid + H(+). In terms of biological role, secreted lipase that hydrolyzes acylglycerol lipids such as triacylglycerols and consequently releases free fatty acid. Due to an absence of fatty acid synthase genes in Malassezia species, secretory lipases are essential for the yeast to generate free fatty acids from degradation of sebum and assimilate them as lipid sources for growth. Plays important roles not only in lipid metabolism but also in the immune response of host cells and pathogenesis. This chain is Secreted triacylglycerol lipase LIP2, found in Malassezia furfur (Pityriasis versicolor infection agent).